Here is a 122-residue protein sequence, read N- to C-terminus: Small ribosomal subunit protein uS13 (122 aa).

The tract at residues 95–122 is disordered; it reads GLPVRGQRTKTNSRTRKGRRKTVANKKK. Over residues 101–122 the composition is skewed to basic residues; the sequence is QRTKTNSRTRKGRRKTVANKKK.

The protein belongs to the universal ribosomal protein uS13 family. Part of the 30S ribosomal subunit. Forms a loose heterodimer with protein S19. Forms two bridges to the 50S subunit in the 70S ribosome.

In terms of biological role, located at the top of the head of the 30S subunit, it contacts several helices of the 16S rRNA. In the 70S ribosome it contacts the 23S rRNA (bridge B1a) and protein L5 of the 50S subunit (bridge B1b), connecting the 2 subunits; these bridges are implicated in subunit movement. Contacts the tRNAs in the A and P-sites. The polypeptide is Small ribosomal subunit protein uS13 (Protochlamydia amoebophila (strain UWE25)).